The chain runs to 601 residues: Aspartate--tRNA(Asp/Asn) ligase (601 aa).

E173 lines the L-aspartate pocket. An aspartate region spans residues 197 to 200; sequence QLFK. R219 is a binding site for L-aspartate. ATP is bound by residues 219–221 and Q228; that span reads RDE. H456 is an L-aspartate binding site. An ATP-binding site is contributed by E490. Residue R497 participates in L-aspartate binding. 542–545 serves as a coordination point for ATP; sequence GWDR. Residues 566–601 are disordered; sequence GGGYDPLTQAPAPITAEQRRESGVDAVPDDETAPQA. The span at 592–601 shows a compositional bias: acidic residues; that stretch reads VPDDETAPQA.

It belongs to the class-II aminoacyl-tRNA synthetase family. Type 1 subfamily. Homodimer.

Its subcellular location is the cytoplasm. The enzyme catalyses tRNA(Asx) + L-aspartate + ATP = L-aspartyl-tRNA(Asx) + AMP + diphosphate. Functionally, aspartyl-tRNA synthetase with relaxed tRNA specificity since it is able to aspartylate not only its cognate tRNA(Asp) but also tRNA(Asn). Reaction proceeds in two steps: L-aspartate is first activated by ATP to form Asp-AMP and then transferred to the acceptor end of tRNA(Asp/Asn). This is Aspartate--tRNA(Asp/Asn) ligase from Beutenbergia cavernae (strain ATCC BAA-8 / DSM 12333 / CCUG 43141 / JCM 11478 / NBRC 16432 / NCIMB 13614 / HKI 0122).